Here is a 344-residue protein sequence, read N- to C-terminus: MMVIRPVERSDVSALMQLASKTGDGLTSLPANEATLSARIERAIKTWQGELPKSEQGYVFVLEDSETGTVPGICAIEVAVGLNDPWYNYRVGTLVHASKELNVYNALPTLFLSNDHTGSSELCTLFLDPDWRKEGNGYLLSKSRFMFMAAFRDKFNDKVVAEMRGVIDEHGYSPFWQSLGKRFFSMDFSRADFLCGTGQKAFIAELMPKHPIYTHFLSQEAQDVIGQVHPQTAPARAVLEKEGFRYRNYIDIFDGGPTLECDIDRVRAIRKSRLVEVAEGQPAQGDFPACLVANENYHHFRVVLARTDPATERLILTAAQLDALKCHAGDRVRLVRLCAEEKTA.

L125 provides a ligand contact to succinyl-CoA. Catalysis depends on H229, which acts as the Proton donor.

Belongs to the arginine N-succinyltransferase family.

It carries out the reaction succinyl-CoA + L-arginine = N(2)-succinyl-L-arginine + CoA + H(+). It functions in the pathway amino-acid degradation; L-arginine degradation via AST pathway; L-glutamate and succinate from L-arginine: step 1/5. Catalyzes the transfer of succinyl-CoA to arginine to produce N(2)-succinylarginine. This is Arginine N-succinyltransferase from Shigella flexneri serotype 5b (strain 8401).